The sequence spans 494 residues: Guanosine-5'-triphosphate,3'-diphosphate pyrophosphatase (494 aa).

The protein belongs to the GppA/Ppx family. GppA subfamily.

It carries out the reaction guanosine 3'-diphosphate 5'-triphosphate + H2O = guanosine 3',5'-bis(diphosphate) + phosphate + H(+). It functions in the pathway purine metabolism; ppGpp biosynthesis; ppGpp from GTP: step 2/2. Its function is as follows. Catalyzes the conversion of pppGpp to ppGpp. Guanosine pentaphosphate (pppGpp) is a cytoplasmic signaling molecule which together with ppGpp controls the 'stringent response', an adaptive process that allows bacteria to respond to amino acid starvation, resulting in the coordinated regulation of numerous cellular activities. This Escherichia coli (strain 55989 / EAEC) protein is Guanosine-5'-triphosphate,3'-diphosphate pyrophosphatase.